The following is a 327-amino-acid chain: Methionyl-tRNA formyltransferase (327 aa).

121-124 (SLLP) contributes to the (6S)-5,6,7,8-tetrahydrofolate binding site.

This sequence belongs to the Fmt family.

It catalyses the reaction L-methionyl-tRNA(fMet) + (6R)-10-formyltetrahydrofolate = N-formyl-L-methionyl-tRNA(fMet) + (6S)-5,6,7,8-tetrahydrofolate + H(+). In terms of biological role, attaches a formyl group to the free amino group of methionyl-tRNA(fMet). The formyl group appears to play a dual role in the initiator identity of N-formylmethionyl-tRNA by promoting its recognition by IF2 and preventing the misappropriation of this tRNA by the elongation apparatus. The chain is Methionyl-tRNA formyltransferase from Paraburkholderia phymatum (strain DSM 17167 / CIP 108236 / LMG 21445 / STM815) (Burkholderia phymatum).